Here is a 364-residue protein sequence, read N- to C-terminus: UDP-N-acetylglucosamine--N-acetylmuramyl-(pentapeptide) pyrophosphoryl-undecaprenol N-acetylglucosamine transferase (364 aa).

UDP-N-acetyl-alpha-D-glucosamine-binding positions include 10–12 (TGG), Asn-128, Arg-170, Ser-199, Ile-250, and Gln-295.

Belongs to the glycosyltransferase 28 family. MurG subfamily.

The protein localises to the cell inner membrane. The enzyme catalyses di-trans,octa-cis-undecaprenyl diphospho-N-acetyl-alpha-D-muramoyl-L-alanyl-D-glutamyl-meso-2,6-diaminopimeloyl-D-alanyl-D-alanine + UDP-N-acetyl-alpha-D-glucosamine = di-trans,octa-cis-undecaprenyl diphospho-[N-acetyl-alpha-D-glucosaminyl-(1-&gt;4)]-N-acetyl-alpha-D-muramoyl-L-alanyl-D-glutamyl-meso-2,6-diaminopimeloyl-D-alanyl-D-alanine + UDP + H(+). Its pathway is cell wall biogenesis; peptidoglycan biosynthesis. Cell wall formation. Catalyzes the transfer of a GlcNAc subunit on undecaprenyl-pyrophosphoryl-MurNAc-pentapeptide (lipid intermediate I) to form undecaprenyl-pyrophosphoryl-MurNAc-(pentapeptide)GlcNAc (lipid intermediate II). This is UDP-N-acetylglucosamine--N-acetylmuramyl-(pentapeptide) pyrophosphoryl-undecaprenol N-acetylglucosamine transferase from Chlorobaculum tepidum (strain ATCC 49652 / DSM 12025 / NBRC 103806 / TLS) (Chlorobium tepidum).